Reading from the N-terminus, the 252-residue chain is Probable transcriptional regulatory protein THA_1246 (252 aa).

The protein belongs to the TACO1 family.

Its subcellular location is the cytoplasm. The sequence is that of Probable transcriptional regulatory protein THA_1246 from Thermosipho africanus (strain TCF52B).